Consider the following 249-residue polypeptide: Very-long-chain (3R)-3-hydroxyacyl-CoA dehydratase 1 (249 aa).

Residues 1 to 22 (MASSEEDGTNGGASEAGEEKEA) are disordered. Residues 1-36 (MASSEEDGTNGGASEAGEEKEAPGRRRRLGLLATVW) are Cytoplasmic-facing. The helical transmembrane segment at 37 to 56 (LTFYNIAMTAGWLVLAIAMV) threads the bilayer. Residues 57-75 (RFYMEKGTHKGLYKSIQKT) are Lumenal-facing. A helical transmembrane segment spans residues 76–92 (LKFFQTFALLEIVHCLI). Topologically, residues 93-102 (GIVPTSVIVA) are cytoplasmic. A helical membrane pass occupies residues 103-120 (GVQVSSRIFMVWLITHSI). The Lumenal segment spans residues 121–126 (KPIQNE). Residues 127 to 141 (ESVVLFLVAWTVTEI) traverse the membrane as a helical segment. Residues 142–164 (TRYSFYTFSLLDHLPYFIKWARY) are Cytoplasmic-facing. A helical transmembrane segment spans residues 165–182 (NFFIILYPVGVVGELLTI). Residues Y171 and E178 contribute to the active site. The Lumenal portion of the chain corresponds to 183-212 (YAALPYVKKTGMFSIRLPNKYNVSFDYYYF). N204 carries an N-linked (GlcNAc...) asparagine glycan. Residues 213–230 (LLITMASYIPLFPQLYFH) form a helical membrane-spanning segment. At 231 to 249 (MLRQRRKVLHGEVIVEKDD) the chain is on the cytoplasmic side.

It belongs to the very long-chain fatty acids dehydratase HACD family. In terms of assembly, may interact with enzymes of the ELO family (including ELOVL1); with those enzymes that mediate condensation, the first of the four steps of the reaction cycle responsible for fatty acids elongation, may be part of a larger fatty acids elongase complex. Interacts with TECR. In terms of tissue distribution, skeletal muscle.

The protein resides in the endoplasmic reticulum membrane. The catalysed reaction is a very-long-chain (3R)-3-hydroxyacyl-CoA = a very-long-chain (2E)-enoyl-CoA + H2O. The enzyme catalyses (3R)-hydroxyhexadecanoyl-CoA = (2E)-hexadecenoyl-CoA + H2O. It catalyses the reaction (3R)-hydroxyoctadecanoyl-CoA = (2E)-octadecenoyl-CoA + H2O. It carries out the reaction (3R)-hydroxyeicosanoyl-CoA = (2E)-eicosenoyl-CoA + H2O. The catalysed reaction is (3R)-hydroxydocosanoyl-CoA = (2E)-docosenoyl-CoA + H2O. The enzyme catalyses (3R)-hydroxytetracosanoyl-CoA = (2E)-tetracosenoyl-CoA + H2O. It catalyses the reaction (3R)-hydroxyhexacosanoyl-CoA = (2E)-hexacosenoyl-CoA + H2O. Its pathway is lipid metabolism; fatty acid biosynthesis. Functionally, catalyzes the third of the four reactions of the long-chain fatty acids elongation cycle. This endoplasmic reticulum-bound enzymatic process, allows the addition of two carbons to the chain of long- and very long-chain fatty acids/VLCFAs per cycle. This enzyme catalyzes the dehydration of the 3-hydroxyacyl-CoA intermediate into trans-2,3-enoyl-CoA, within each cycle of fatty acid elongation. Thereby, it participates in the production of VLCFAs of different chain lengths that are involved in multiple biological processes as precursors of membrane lipids and lipid mediators. This chain is Very-long-chain (3R)-3-hydroxyacyl-CoA dehydratase 1 (HACD1), found in Canis lupus familiaris (Dog).